Consider the following 212-residue polypeptide: Ion-translocating oxidoreductase complex subunit G (212 aa).

The helical transmembrane segment at 9-29 (GFLLALFALICTGLVAAVNQQ) threads the bilayer. Residue Thr176 is modified to FMN phosphoryl threonine.

The protein belongs to the RnfG family. As to quaternary structure, the complex is composed of six subunits: RnfA, RnfB, RnfC, RnfD, RnfE and RnfG. It depends on FMN as a cofactor.

It is found in the cell inner membrane. Part of a membrane-bound complex that couples electron transfer with translocation of ions across the membrane. This is Ion-translocating oxidoreductase complex subunit G from Shewanella baltica (strain OS223).